The primary structure comprises 155 residues: Small ribosomal subunit protein uS7c (155 aa).

The protein belongs to the universal ribosomal protein uS7 family. As to quaternary structure, part of the 30S ribosomal subunit.

It is found in the plastid. It localises to the chloroplast. One of the primary rRNA binding proteins, it binds directly to 16S rRNA where it nucleates assembly of the head domain of the 30S subunit. This is Small ribosomal subunit protein uS7c (rps7) from Canella winterana (Wild cinnamon).